A 166-amino-acid polypeptide reads, in one-letter code: Putative universal stress protein SA1532 (166 aa).

This sequence belongs to the universal stress protein A family.

The protein resides in the cytoplasm. The chain is Putative universal stress protein SA1532 from Staphylococcus aureus (strain N315).